Consider the following 318-residue polypeptide: Porphobilinogen deaminase (318 aa).

C248 carries the S-(dipyrrolylmethanemethyl)cysteine modification.

It belongs to the HMBS family. Monomer. It depends on dipyrromethane as a cofactor.

It catalyses the reaction 4 porphobilinogen + H2O = hydroxymethylbilane + 4 NH4(+). It functions in the pathway porphyrin-containing compound metabolism; protoporphyrin-IX biosynthesis; coproporphyrinogen-III from 5-aminolevulinate: step 2/4. Functionally, tetrapolymerization of the monopyrrole PBG into the hydroxymethylbilane pre-uroporphyrinogen in several discrete steps. In Caulobacter sp. (strain K31), this protein is Porphobilinogen deaminase.